Consider the following 358-residue polypeptide: Bis(monoacylglycero)phosphate synthase CLN5 (358 aa).

Residues 1–23 are disordered; the sequence is MAQVGSAGPGACGRRGAGAGAGP. Residues 1–29 lie on the Cytoplasmic side of the membrane; the sequence is MAQVGSAGPGACGRRGAGAGAGPERTTWR. Residues 7–21 are compositionally biased toward gly residues; the sequence is AGPGACGRRGAGAGA. The helical; Signal-anchor for type II membrane protein transmembrane segment at 30–46 threads the bilayer; the sequence is WAPALLWLATAAAVAGD. Over 47–358 the chain is Lumenal; the sequence is PSRRQWPVPY…NRKNRTLSGL (312 aa). Cystine bridges form between Cys69-Cys158 and Cys76-Cys164. The Proton acceptor role is filled by His116. N-linked (GlcNAc...) asparagine glycans are attached at residues Asn129, Asn142, Asn177, and Asn202. Cys230 acts as the Nucleophile; Acyl-thioester intermediate in catalysis. Asn254, Asn270, and Asn280 each carry an N-linked (GlcNAc...) asparagine glycan. The membrane-anchoring stretch occupies residues 303 to 342; it reads FLLSLLQIFDAVVIHREFYLFYNFEYWFLPMKYPFIKITY. An N-linked (GlcNAc...) asparagine glycan is attached at Asn352.

It belongs to the CLN5 family. As to quaternary structure, multimer. Interacts with SORT1, RAB5A and RAB7A. Interacts with PPT1, TPP1, CLN3, CLN6, CLN8, ATP5F1A and ATP5F1B. N-glycosylated with both high mannose and complex type sugars. Glycosylation is important for proper folding and trafficking to the lysosomes. Post-translationally, the type II membrane signal anchor is proteolytically cleaved to produce a mature form that is transported to the lysosomes (Bis(monoacylglycero)phosphate synthase CLN5, secreted form). In terms of processing, can undergo proteolytic cleavage at the C-terminus, probably by a cysteine protease and may involve the removal of approximately 10-15 residues from the C-terminal end.

Its subcellular location is the lysosome. The protein resides in the membrane. The enzyme catalyses S-hexadecanoyl-L-cysteinyl-[protein] + H2O = L-cysteinyl-[protein] + hexadecanoate + H(+). It carries out the reaction 2 1-acyl-sn-glycero-3-phospho-(1'-sn-glycerol) = 1-acyl-sn-glycero-3-phospho-(3'-acyl-sn-1'-glycerol) + sn-glycero-3-phospho-(1'-sn-glycerol). The catalysed reaction is 2 1-(9Z-octadecenoyl)-sn-glycero-3-phospho-(1'-sn-glycerol) = 1-(9Z-octadecenoyl)-sn-glycero-3-phospho-(3'-(9Z-octadecenoyl)-1'-sn-glycerol) + sn-glycero-3-phospho-(1'-sn-glycerol). It catalyses the reaction 2 1-octadecanoyl-sn-glycero-3-phospho-(1'-sn-glycerol) = 1-octadecanoyl-sn-glycero-3-phospho-(3'-octadecanoyl-1'-sn-glycerol) + sn-glycero-3-phospho-(1'-sn-glycerol). The enzyme catalyses 2 1-hexadecanoyl-sn-glycero-3-phospho-(1'-sn-glycerol) = 1-hexadecanoyl-sn-glycero-3-phospho-(3'-hexadecanoyl-1'-sn-glycerol) + sn-glycero-3-phospho-(1'-sn-glycerol). It carries out the reaction 2 1-tetradecanoyl-sn-glycero-3-phospho-(1'-sn-glycerol) = 1-tetradecanoyl-sn-glycero-3-phospho-(3'-tetradecanoyl-1'-sn-glycerol) + sn-glycero-3-phospho-(1'-sn-glycerol). Catalyzes the synthesis of bis(monoacylglycero)phosphate (BMP) via transacylation of 2 molecules of lysophosphatidylglycerol (LPG). BMP also known as lysobisphosphatidic acid plays a key role in the formation of intraluminal vesicles and in maintaining intracellular cholesterol homeostasis. Can use only LPG as the exclusive lysophospholipid acyl donor for base exchange and displays BMP synthase activity towards various LPGs (LPG 14:0, LPG 16:0, LPG 18:0, LPG 18:1) with a higher preference for longer chain lengths. Plays a role in influencing the retrograde trafficking of lysosomal sorting receptors SORT1 and IGF2R from the endosomes to the trans-Golgi network by controlling the recruitment of retromer complex to the endosomal membrane. Regulates the localization and activation of RAB7A which is required to recruit the retromer complex to the endosomal membrane. Its function is as follows. Exhibits palmitoyl protein thioesterase (S-depalmitoylation) activity in vitro and most likely plays a role in protein S-depalmitoylation. The sequence is that of Bis(monoacylglycero)phosphate synthase CLN5 (CLN5) from Bos taurus (Bovine).